The primary structure comprises 187 residues: Avirulence protein ATR39-2 (187 aa).

The signal sequence occupies residues 1 to 20 (MVKCTPLLALTVIVSAGSDA). The RxLR-dEER signature appears at 49–66 (RVLRASDVPNEVAAGESR).

It belongs to the RxLR effector family.

The protein localises to the secreted. It localises to the host cell. In terms of biological role, secreted effector that acts as an elicitor of hypersensitive response (HR) specifically on plants carrying defense protein RPP39. The allele ATR39-1 is recognized by RPP39, whereas the ATR39-2 allele is nor recognized. The chain is Avirulence protein ATR39-2 from Hyaloperonospora arabidopsidis (strain Emoy2) (Downy mildew agent).